We begin with the raw amino-acid sequence, 206 residues long: Flavin prenyltransferase UbiX (206 aa).

Residues 11–13 (GAS), S37, 103–106 (SMST), and R138 contribute to the FMN site. Dimethylallyl phosphate contacts are provided by Y168 and R184.

Belongs to the UbiX/PAD1 family.

It catalyses the reaction dimethylallyl phosphate + FMNH2 = prenylated FMNH2 + phosphate. Functionally, flavin prenyltransferase that catalyzes the synthesis of the prenylated FMN cofactor (prenyl-FMN) for 4-hydroxy-3-polyprenylbenzoic acid decarboxylase UbiD. The prenyltransferase is metal-independent and links a dimethylallyl moiety from dimethylallyl monophosphate (DMAP) to the flavin N5 and C6 atoms of FMN. The protein is Flavin prenyltransferase UbiX of Synechocystis sp. (strain ATCC 27184 / PCC 6803 / Kazusa).